A 1482-amino-acid polypeptide reads, in one-letter code: Pregnancy zone protein (1482 aa).

The N-terminal stretch at 1-25 (MRKDRLLHLCLVLLLILLSASDSNS) is a signal peptide. Asparagine 54, asparagine 69, asparagine 246, asparagine 392, and asparagine 406 each carry an N-linked (GlcNAc...) asparagine glycan. Residues 685–735 (CSVIPSVSAGAVGQGYYGAGLGVVERPYVPQLGTYNVIPLNNEQSSGPVPE) are bait region. Residues asparagine 753, asparagine 875, and asparagine 932 are each glycosylated (N-linked (GlcNAc...) asparagine). Positions 978 to 981 (CGEQ) form a cross-link, isoglutamyl cysteine thioester (Cys-Gln). Residues asparagine 997 and asparagine 1430 are each glycosylated (N-linked (GlcNAc...) asparagine).

This sequence belongs to the protease inhibitor I39 (alpha-2-macroglobulin) family. As to quaternary structure, homotetramer, which consists of two pairs of disulfide-linked chains. In terms of tissue distribution, plasma. Prominent constituent of late-pregnancy sera.

The protein resides in the secreted. Is able to inhibit all four classes of proteinases by a unique 'trapping' mechanism. This protein has a peptide stretch, called the 'bait region' which contains specific cleavage sites for different proteinases. When a proteinase cleaves the bait region, a conformational change is induced in the protein which traps the proteinase. The entrapped enzyme remains active against low molecular weight substrates (activity against high molecular weight substrates is greatly reduced). Following cleavage in the bait region a thioester bond is hydrolyzed and mediates the covalent binding of the protein to the proteinase. This is Pregnancy zone protein (PZP) from Homo sapiens (Human).